Reading from the N-terminus, the 88-residue chain is Small ribosomal subunit protein bS16c (88 aa).

This sequence belongs to the bacterial ribosomal protein bS16 family.

It is found in the plastid. The protein localises to the chloroplast. The polypeptide is Small ribosomal subunit protein bS16c (Oenothera elata subsp. hookeri (Hooker's evening primrose)).